The sequence spans 165 residues: SPbeta prophage-derived uncharacterized protein YorR (165 aa).

This Bacillus subtilis (strain 168) protein is SPbeta prophage-derived uncharacterized protein YorR (yorR).